A 113-amino-acid polypeptide reads, in one-letter code: Large ribosomal subunit protein eL30 (113 aa).

This sequence belongs to the eukaryotic ribosomal protein eL30 family.

The protein is Large ribosomal subunit protein eL30 (RpL30) of Spodoptera frugiperda (Fall armyworm).